The chain runs to 143 residues: Large ribosomal subunit protein uL11 (143 aa).

Belongs to the universal ribosomal protein uL11 family. Part of the ribosomal stalk of the 50S ribosomal subunit. Interacts with L10 and the large rRNA to form the base of the stalk. L10 forms an elongated spine to which L12 dimers bind in a sequential fashion forming a multimeric L10(L12)X complex. In terms of processing, one or more lysine residues are methylated.

In terms of biological role, forms part of the ribosomal stalk which helps the ribosome interact with GTP-bound translation factors. The chain is Large ribosomal subunit protein uL11 from Albidiferax ferrireducens (strain ATCC BAA-621 / DSM 15236 / T118) (Rhodoferax ferrireducens).